Consider the following 74-residue polypeptide: Hadrucalcin (74 aa).

Positions M1 to A27 are cleaved as a signal peptide. A propeptide spanning residues R28–R39 is cleaved from the precursor. 3 disulfides stabilise this stretch: C44–C58, C51–C62, and C57–C73. The essential for stimulation of [3H]ryanodine binding to RYR1 stretch occupies residues R64–R65.

As to expression, expressed by the venom gland.

Its subcellular location is the secreted. In terms of biological role, this toxin activates ryanodine receptors RyR1 and RyR2 by inducing a long-lasting subconductance state (35% of the full conductance stateon RyR1). Furthermore, it triggers calcium release from sarcoplasmic vesicles (11.8 nM are enough to induce a sharp release on RyR1, and 55% of the total calcium is released after toxin (100 nM) addition on RyR1) probably by acting as a cell-penetrating peptide (CPP). In addition, it has been shown to dose-dependently stimulate ryanodine binding to RyR1 (EC(50)=14.8 nM). It also augments the bell-shaped calcium-[3H]ryanodine binding curve that is maximal at about 10 uM calcium concentration. It binds a different site as ryanodine. It acts synergistically with caffeine. In vivo, intracerebroventricular injection into mice induces neurotoxic symptoms, followed by death. The sequence is that of Hadrucalcin from Hoffmannihadrurus gertschi (Scorpion).